A 396-amino-acid chain; its full sequence is Putative N(4)-(beta-N-acetylglucosaminyl)-L-asparaginase GE19290 (396 aa).

An N-terminal signal peptide occupies residues Met1–Ala23. 2 disulfides stabilise this stretch: Cys100–Cys105 and Cys199–Cys215. Catalysis depends on Thr246, which acts as the Nucleophile. Residues Arg274–Asp277 and Thr297–Gly300 each bind substrate. Cys357 and Cys384 are oxidised to a cystine.

Belongs to the Ntn-hydrolase family. As to quaternary structure, heterotetramer of two alpha and two beta chains arranged as a dimer of alpha/beta heterodimers. Cleaved into an alpha and beta chain by autocatalysis; this activates the enzyme. The N-terminal residue of the beta subunit is responsible for the nucleophile hydrolase activity.

The enzyme catalyses N(4)-(beta-N-acetyl-D-glucosaminyl)-L-asparagine + H2O = N-acetyl-beta-D-glucosaminylamine + L-aspartate + H(+). Cleaves the GlcNAc-Asn bond which joins oligosaccharides to the peptide of asparagine-linked glycoproteins. This is Putative N(4)-(beta-N-acetylglucosaminyl)-L-asparaginase GE19290 from Drosophila yakuba (Fruit fly).